A 446-amino-acid polypeptide reads, in one-letter code: Radical S-adenosyl methionine domain-containing protein 1, mitochondrial (446 aa).

The region spanning 15–277 (KGYNKLKDLP…VCEAEAMGFQ (263 aa)) is the Radical SAM core domain. Positions 34, 38, and 41 each coordinate [4Fe-4S] cluster. S-adenosyl-L-methionine is bound by residues Gly-94, 95-96 (GT), Glu-130, Gln-159, Arg-171, and Asp-195.

The protein belongs to the anaerobic coproporphyrinogen-III oxidase family. HemW subfamily.

The protein localises to the mitochondrion. Its function is as follows. May be a heme chaperone, appears to bind heme. Homologous bacterial proteins do not have oxygen-independent coproporphyrinogen-III oxidase activity. Binds 1 [4Fe-4S] cluster. The cluster is coordinated with 3 cysteines and an exchangeable S-adenosyl-L-methionine. This chain is Radical S-adenosyl methionine domain-containing protein 1, mitochondrial (rsad1), found in Dictyostelium discoideum (Social amoeba).